The primary structure comprises 190 residues: Imidazoleglycerol-phosphate dehydratase (190 aa).

It belongs to the imidazoleglycerol-phosphate dehydratase family.

The protein localises to the cytoplasm. The catalysed reaction is D-erythro-1-(imidazol-4-yl)glycerol 3-phosphate = 3-(imidazol-4-yl)-2-oxopropyl phosphate + H2O. It functions in the pathway amino-acid biosynthesis; L-histidine biosynthesis; L-histidine from 5-phospho-alpha-D-ribose 1-diphosphate: step 6/9. This is Imidazoleglycerol-phosphate dehydratase from Aliarcobacter butzleri (strain RM4018) (Arcobacter butzleri).